Here is a 107-residue protein sequence, read N- to C-terminus: U1-lycotoxin-Ls1b (107 aa).

Residues 1–20 (MMKVLVVIALLVTLISYSSS) form the signal peptide. Positions 21-41 (EGIDDLEADELLSLMANEQTR) are excised as a propeptide. 4 disulfides stabilise this stretch: C44–C59, C51–C68, C58–C86, and C70–C84.

Belongs to the neurotoxin 19 (CSTX) family. 04 (U1-Lctx) subfamily. In terms of tissue distribution, expressed by the venom gland.

The protein resides in the secreted. The chain is U1-lycotoxin-Ls1b from Lycosa singoriensis (Wolf spider).